Consider the following 2316-residue polypeptide: Receptor-type tyrosine-protein phosphatase zeta (2316 aa).

The N-terminal stretch at 1 to 24 is a signal peptide; it reads MRILQSFLACVQLLCVCRLDWAYG. Topologically, residues 25–1637 are extracellular; sequence YYRQQRKLVE…LAEGLESEKK (1613 aa). Residues 36–300 form the Alpha-carbonic anhydrase domain; sequence IGWSYTGALN…KFSRQVFSSY (265 aa). 2 disulfide bridges follow: Cys-56–Cys-240 and Cys-133–Cys-264. Residues Asn-105, Asn-134, Asn-223, Asn-232, Asn-324, Asn-381, and Asn-497 are each glycosylated (N-linked (GlcNAc...) asparagine). Positions 314 to 413 constitute a Fibronectin type-III domain; that stretch reads EPENVQADPE…LIVDMPTEDA (100 aa). 2 disordered regions span residues 433-499 and 518-537; these read YGKG…LNTS and LPSQIGTNLPPHSVEGTSAS. The N-linked (GlcNAc...) asparagine glycan is linked to Asn-552. Phosphoserine is present on residues Ser-572 and Ser-576. Disordered stretches follow at residues 586–624 and 636–720; these read KLDSGADDSSGSSPASSTVPFSTDNLSHGYTSSSDTPEA and RNAL…EMPH. Low complexity predominate over residues 592 to 602; sequence DDSSGSSPASS. Ser-595 carries O-linked (Xyl...) (chondroitin sulfate) serine glycosylation. A compositionally biased stretch (polar residues) spans 603-621; sequence TVPFSTDNLSHGYTSSSDT. An N-linked (GlcNAc...) asparagine glycan is attached at Asn-610. Ser-645 is modified (phosphoserine; alternate). An O-linked (Xyl...) (chondroitin sulfate) serine; alternate glycan is attached at Ser-645. A Phosphoserine modification is found at Ser-647. Over residues 666 to 675 the composition is skewed to polar residues; it reads TDLTTQSETG. N-linked (GlcNAc...) asparagine glycosylation occurs at Asn-685. Residues 699–711 show a composition bias toward polar residues; the sequence is ETFSPDATASRGP. An N-linked (GlcNAc...) asparagine glycan is attached at Asn-786. Ser-1005 carries O-linked (Xyl...) (chondroitin sulfate) serine glycosylation. 2 N-linked (GlcNAc...) asparagine glycosylation sites follow: Asn-1025 and Asn-1058. Disordered stretches follow at residues 1141–1172, 1204–1228, 1401–1521, and 1545–1622; these read QASGDTWLKPGLSTNSEPALSDTASSEVSHPS, KTALPSGPRDPVLTETPMVEQSSSS, LLPS…DGRE, and TSDE…NSSH. Positions 1152–1172 are enriched in polar residues; it reads LSTNSEPALSDTASSEVSHPS. A compositionally biased stretch (polar residues) spans 1401-1413; the sequence is LLPSKATSKPTHS. Residues 1425–1439 show a composition bias toward acidic residues; the sequence is EDGDDYDDDDYDDID. Asn-1463 carries an N-linked (GlcNAc...) asparagine glycan. Residues 1464 to 1478 are compositionally biased toward polar residues; sequence DSDTQESSLVDQSDP. 2 O-linked (Xyl...) (chondroitin sulfate) serine glycosylation sites follow: Ser-1550 and Ser-1552. 2 stretches are compositionally biased toward polar residues: residues 1555 to 1569 and 1595 to 1609; these read GTSDSLNDNETSTDF and PRSSTPSVTSGHSGV. Asn-1563 carries an N-linked (GlcNAc...) asparagine glycan. Residues 1610 to 1621 are compositionally biased toward low complexity; the sequence is SNSSEAEASNSS. N-linked (GlcNAc...) asparagine glycans are attached at residues Asn-1611 and Asn-1619. Residues 1638–1663 traverse the membrane as a helical segment; it reads AVIPLVIVSALTFICLVVLVGILIYW. Residues 1664 to 2316 are Cytoplasmic-facing; that stretch reads RKCFQTAHFY…NIAESLESLV (653 aa). Phosphothreonine occurs at positions 1685 and 1688. Tyrosine-protein phosphatase domains lie at 1718–1993 and 2024–2283; these read FTEE…LVEA and LEKQ…VLSL. Substrate contacts are provided by residues Asp-1902, 1934 to 1940, and Gln-1978; that span reads CSAGVGR. Cys-1934 serves as the catalytic Phosphocysteine intermediate. The residue at position 2056 (Ser-2056) is a Phosphoserine.

The protein belongs to the protein-tyrosine phosphatase family. Receptor class 5 subfamily. In terms of assembly, interacts with tenascin. Interacts with N-CAM and NG-CAM. The carbonic-anhydrase like domain interacts with CNTN1 (contactin). Interacts with PTN. Interaction with PTN promotes formation of homooligomers; oligomerization impairs phosphatase activity. Interacts (via chondroitin sulfate chains) with MDK (via C-terminal); this interaction is inhibited by PTN; this interaction promotes neuronal migration. Nervous tissue specific.

The protein resides in the cell membrane. It localises to the secreted. It catalyses the reaction O-phospho-L-tyrosyl-[protein] + H2O = L-tyrosyl-[protein] + phosphate. Protein tyrosine phosphatase that negatively regulates oligodendrocyte precursor proliferation in the embryonic spinal cord. Required for normal differentiation of the precursor cells into mature, fully myelinating oligodendrocytes. May play a role in protecting oligondendrocytes against apoptosis. May play a role in the establishment of contextual memory, probably via the dephosphorylation of proteins that are part of important signaling cascades. In terms of biological role, isoform 3 (phosphacan), previously designated 3F8 chondroitin sulfate proteoglycan or 3H1 keratan sulfate proteoglycan depending on the glycosylation status, is a soluble nervous tissue-specific proteoglycan. It is synthesized by glia and binds to neurons and to the neural cell adhesion molecules tenascin, N-CAM or NG-CAM but not to laminin and fibronectin. Phosphacan acts as a potent inhibitor of cell adhesion and neurite outgrowth. In Rattus norvegicus (Rat), this protein is Receptor-type tyrosine-protein phosphatase zeta (Ptprz1).